A 421-amino-acid chain; its full sequence is Imidazolonepropionase (421 aa).

Positions 80 and 82 each coordinate Fe(3+). Positions 80 and 82 each coordinate Zn(2+). 4-imidazolone-5-propanoate is bound by residues R89, Y152, and H185. An N-formimidoyl-L-glutamate-binding site is contributed by Y152. Residue H249 coordinates Fe(3+). H249 is a binding site for Zn(2+). Position 252 (E252) interacts with 4-imidazolone-5-propanoate. D324 lines the Fe(3+) pocket. D324 lines the Zn(2+) pocket. N-formimidoyl-L-glutamate contacts are provided by N326 and G328. Residue S329 participates in 4-imidazolone-5-propanoate binding.

The protein belongs to the metallo-dependent hydrolases superfamily. HutI family. In terms of assembly, homodimer. The cofactor is Zn(2+). Requires Fe(3+) as cofactor.

The protein localises to the cytoplasm. The enzyme catalyses 4-imidazolone-5-propanoate + H2O = N-formimidoyl-L-glutamate. Its pathway is amino-acid degradation; L-histidine degradation into L-glutamate; N-formimidoyl-L-glutamate from L-histidine: step 3/3. Functionally, catalyzes the hydrolytic cleavage of the carbon-nitrogen bond in imidazolone-5-propanoate to yield N-formimidoyl-L-glutamate. It is the third step in the universal histidine degradation pathway. In Bacillus subtilis (strain 168), this protein is Imidazolonepropionase.